The chain runs to 468 residues: Interleukin-6 receptor subunit alpha (468 aa).

An N-terminal signal peptide occupies residues Met-1–Ala-19. Over Leu-20 to Pro-365 the chain is Extracellular. 4 cysteine pairs are disulfide-bonded: Cys-25–Cys-193, Cys-47–Cys-96, Cys-121–Cys-132, and Cys-165–Cys-176. One can recognise an Ig-like C2-type domain in the interval Pro-26–Val-112. 2 N-linked (GlcNAc...) asparagine glycosylation sites follow: Asn-55 and Asn-93. Fibronectin type-III domains follow at residues Pro-113–Asp-217 and Pro-218–Thr-316. Asn-221 and Asn-245 each carry an N-linked (GlcNAc...) asparagine glycan. The WSXWS motif motif lies at Trp-303 to Ser-307. Positions Trp-303–Ser-328 are disordered. Asn-350 carries N-linked (GlcNAc...) asparagine glycosylation. Thr-352 carries an O-linked (GlcNAc) threonine glycan. The chain crosses the membrane as a helical span at residues Thr-366 to Leu-386. At Arg-387–Arg-468 the chain is on the cytoplasmic side. Over residues Thr-421–Ser-433 the composition is skewed to pro residues. The disordered stretch occupies residues Thr-421–Arg-468. Residues Asn-446–Ser-455 show a composition bias toward basic and acidic residues. Residues Asp-458 to Arg-468 are compositionally biased toward polar residues.

This sequence belongs to the type I cytokine receptor family. Type 3 subfamily. In terms of assembly, component of a hexamer of two molecules each of IL6, IL6R and IL6ST; first binds to IL6 to associate with the signaling subunit IL6ST. Interacts (via N-terminal ectodomain) with SORL1; this interaction may affect IL6-binding to IL6R, hence decrease IL6 'classic-signaling'. Also interacts with SORL1; this interaction leads to soluble IL6R internalization. May form a trimeric complex with the soluble SORL1 ectodomain and circulating IL6 receptor; this interaction might stabilize circulating IL6, hence promote IL6 'trans-signaling,. In terms of processing, a short soluble form is released from the membrane by proteolysis. The sIL6R is formed mostly by limited proteolysis of membrane-bound receptors, a process referred to as ectodomain shedding, but is also directly secreted from the cells after alternative mRNA splicing. mIL6R is cleaved by the proteases ADAM10 and ADAM17. Post-translationally, glycosylated. Glycosylation is dispensable for transport, signaling, and cell-surface turnover. Glycosylation at Asn-55 is a protease-regulatory exosite. Glycosylation is required for ADAM17-mediated proteolysis. As to expression, expressed in peripheral blood mononuclear cells and weakly found in urine and serum. 1%-20% of the total sIL6R in plasma is generated by alternative splicing.

The protein localises to the cell membrane. Its subcellular location is the secreted. With respect to regulation, classic and trans-signaling are both inhibited by tocilizumab, a humanized monoclonal antibody that blocks interleukin IL6R signaling. Functionally, part of the receptor for interleukin 6. Binds to IL6 with low affinity, but does not transduce a signal. Signal activation necessitate an association with IL6ST. Activation leads to the regulation of the immune response, acute-phase reactions and hematopoiesis. The interaction with membrane-bound IL6R and IL6ST stimulates 'classic signaling', the restricted expression of the IL6R limits classic IL6 signaling to only a few tissues such as the liver and some cells of the immune system. Whereas the binding of IL6 and soluble IL6R to IL6ST stimulates 'trans-signaling'. Alternatively, 'cluster signaling' occurs when membrane-bound IL6:IL6R complexes on transmitter cells activate IL6ST receptors on neighboring receiver cells. In terms of biological role, signaling via the membrane-bound IL6R is mostly regenerative and anti-inflammatory. Drives naive CD4(+) T cells to the Th17 lineage, through 'cluster signaling' by dendritic cells. Its function is as follows. Soluble form of IL6 receptor (sIL6R) that acts as an agonist of IL6 activity. The IL6:sIL6R complex (hyper-IL6) binds to IL6ST/gp130 on cell surfaces and induces signaling also on cells that do not express membrane-bound IL6R in a process called IL6 'trans-signaling'. sIL6R is causative for the pro-inflammatory properties of IL6 and an important player in the development of chronic inflammatory diseases. In complex with IL6, is required for induction of VEGF production. Plays a protective role during liver injury, being required for maintenance of tissue regeneration. 'Trans-signaling' in central nervous system regulates energy and glucose homeostasis. This is Interleukin-6 receptor subunit alpha from Homo sapiens (Human).